The primary structure comprises 353 residues: Fe(3+) ions import ATP-binding protein FbpC (353 aa).

An ABC transporter domain is found at 9-239; it reads VTFENVTKKF…PASAFIADFM (231 aa). 41–48 lines the ATP pocket; it reads GPSGCGKT.

It belongs to the ABC transporter superfamily. Fe(3+) ion importer (TC 3.A.1.10) family. In terms of assembly, the complex is composed of two ATP-binding proteins (FbpC), two transmembrane proteins (FbpB) and a solute-binding protein (FbpA).

The protein resides in the cell inner membrane. It catalyses the reaction Fe(3+)(out) + ATP + H2O = Fe(3+)(in) + ADP + phosphate + H(+). Functionally, part of the ABC transporter complex FbpABC involved in Fe(3+) ions import. Responsible for energy coupling to the transport system. This Brucella abortus (strain 2308) protein is Fe(3+) ions import ATP-binding protein FbpC.